Reading from the N-terminus, the 505-residue chain is Forkhead box protein O4 (505 aa).

Disordered regions lie at residues Met-1–Pro-66, Ser-175–Pro-244, and Arg-257–Pro-276. Thr-32 is subject to Phosphothreonine; by PKB/AKT1. Residues Arg-97–Lys-215 form a required for interaction with FOXK1 region. A DNA-binding region (fork-head) is located at residues Ala-100 to Gly-188. Ser-197 is subject to Phosphoserine; by PKB/AKT1. Residues Leu-205 to Pro-216 are compositionally biased toward basic residues. Residues Arg-257–Leu-271 show a composition bias toward polar residues. Ser-262 carries the post-translational modification Phosphoserine; by PKB/AKT1.

As to quaternary structure, interacts with CREBBP/CBP, MYOCD, SIRT1, SRF and YWHAZ. Acetylated by CREBBP/CBP and deacetylated by SIRT1. Binding of YWHAZ inhibits DNA-binding. Interacts with USP7; the interaction is enhanced in presence of hydrogen peroxide and occurs independently of TP53. Interacts with NLK, and this inhibits monoubiquitination and transcriptional activity. Interacts with FOXK1; the interaction inhibits MEF2C transactivation activity. In terms of processing, acetylation by CREBBP/CBP is induced by oxidative stress and inhibits transcriptional activity. Deacetylation by SIRT1 is NAD-dependent and stimulates transcriptional activity. Phosphorylation by PKB/AKT1 inhibits transcriptional activity and is responsible for cytoplasmic localization. May be phosphorylated at multiple sites by NLK. Post-translationally, monoubiquitinated; monoubiquitination is induced by oxidative stress and reduced by deacetylase inhibitors; results in its relocalization to the nucleus and its increased transcriptional activity. Deubiquitinated by USP7; deubiquitination is induced by oxidative stress; enhances its interaction with USP7 and consequently, deubiquitination; increases its translocation to the cytoplasm and inhibits its transcriptional activity. Hydrogene-peroxide-induced ubiquitination and USP7-mediated deubiquitination have no major effect on its protein stability. In terms of tissue distribution, strongly expressed in brown adipose tissue and weakly in white adipose tissue (at protein level). Expressed in skeletal muscle.

Its subcellular location is the cytoplasm. The protein localises to the nucleus. Functionally, transcription factor involved in the regulation of the insulin signaling pathway. Binds to insulin-response elements (IREs) and can activate transcription of IGFBP1. Down-regulates expression of HIF1A and suppresses hypoxia-induced transcriptional activation of HIF1A-modulated genes. Also involved in negative regulation of the cell cycle. Involved in increased proteasome activity in embryonic stem cells (ESCs) by activating expression of PSMD11 in ESCs, leading to enhanced assembly of the 26S proteasome, followed by higher proteasome activity. Represses smooth muscle cell differentiation by inhibiting the transcriptional coactivator activity of myocardin. The polypeptide is Forkhead box protein O4 (Foxo4) (Mus musculus (Mouse)).